We begin with the raw amino-acid sequence, 861 residues long: Interleukin-12 receptor subunit beta-2 (861 aa).

A signal peptide spans 1-23; it reads MARTVCGCSWALIFIIMSLLVKA. Residues 24–622 lie on the Extracellular side of the membrane; sequence KIDVCKRGDV…REFCLQGKAN (599 aa). N-linked (GlcNAc...) asparagine glycans are attached at residues Asn48, Asn129, Asn166, and Asn271. Fibronectin type-III domains lie at 126–224, 226–317, 318–415, 423–520, and 521–620; these read QPQN…VVRP, PPWD…TQTP, EKEP…NIAD, APQQ…KHKA, and PLSG…LQGK. A WSXWS motif motif is present at residues 305 to 309; that stretch reads WSDWS. N-linked (GlcNAc...) asparagine glycans are attached at residues Asn347, Asn376, and Asn480. Residues 623 to 643 traverse the membrane as a helical segment; the sequence is WSTFVAPSICIAVITVGVFSM. At 644–861 the chain is on the cytoplasmic side; sequence RCFRQKVFVL…LKMGCGSLML (218 aa). The short motif at 662-670 is the Box 1 motif element; sequence CSREIPDPA. The interval 718–761 is disordered; that stretch reads FRRPHHPNWPGKGQRLQGRHASEEDTGSSASSPPPPRALTAETG. Tyr800 is modified (phosphotyrosine).

Belongs to the type I cytokine receptor family. Type 2 subfamily. Heterodimer/heterooligomer; disulfide-linked. The functional high affinity IL12 receptor is composed of I12RB1 and IL12RB2. Il12RB2 binds JAK2 (via its N-terminal) through a membrane-proximal region of the cytoplasmic domain. On IL12 stimulation, phosphorylated on C-terminal tyrosine residues.

It is found in the membrane. In terms of biological role, receptor for interleukin-12. This subunit is the signaling component coupling to the JAK2/STAT4 pathway. The polypeptide is Interleukin-12 receptor subunit beta-2 (IL12RB2) (Sus scrofa (Pig)).